A 203-amino-acid polypeptide reads, in one-letter code: NAD(P)H-quinone oxidoreductase subunit M, chloroplastic (203 aa).

The transit peptide at 1–21 directs the protein to the chloroplast; the sequence is MAASSSYMACAKFSMLGWLGG. The span at 34 to 48 shows a compositional bias: low complexity; the sequence is SPQEQAEVQESQEVN. Residues 34–61 form a disordered region; it reads SPQEQAEVQESQEVNAQEEEKVKQPVQP.

The protein belongs to the NDH complex subunit M family. Part of the chloroplast NDH complex, composed of a mixture of chloroplast and nucleus encoded subunits. Component of the NDH subcomplex A, at least composed of ndhH, ndhI, ndhJ, ndhK, ndhL, ndhM, ndhN and ndhO.

It is found in the plastid. The protein localises to the chloroplast thylakoid membrane. The enzyme catalyses a plastoquinone + NADH + (n+1) H(+)(in) = a plastoquinol + NAD(+) + n H(+)(out). It catalyses the reaction a plastoquinone + NADPH + (n+1) H(+)(in) = a plastoquinol + NADP(+) + n H(+)(out). Functionally, NDH shuttles electrons from NAD(P)H:plastoquinone, via FMN and iron-sulfur (Fe-S) centers, to quinones in the photosynthetic chain and possibly in a chloroplast respiratory chain. The immediate electron acceptor for the enzyme in this species is believed to be plastoquinone. Couples the redox reaction to proton translocation, and thus conserves the redox energy in a proton gradient. This is NAD(P)H-quinone oxidoreductase subunit M, chloroplastic from Populus jackii (Balm of Gilead).